The primary structure comprises 287 residues: UPF0725 protein At1g19060 (287 aa).

Belongs to the UPF0725 (EMB2204) family.

In Arabidopsis thaliana (Mouse-ear cress), this protein is UPF0725 protein At1g19060.